A 246-amino-acid chain; its full sequence is O-antigen export system ATP-binding protein RfbB (246 aa).

An ABC transporter domain is found at 22–246 (SGIKDLIFHP…IIELYKQAMA (225 aa)). Residue 63-70 (GRNGAGKS) participates in ATP binding.

The protein belongs to the ABC transporter superfamily.

Its subcellular location is the cell inner membrane. May form an ATP-driven O-antigen export apparatus, in association with RfbA. In Klebsiella pneumoniae, this protein is O-antigen export system ATP-binding protein RfbB (rfbB).